The chain runs to 299 residues: Probable lipid kinase YegS (299 aa).

A DAGKc domain is found at 2-133 (AEFPASLLIL…IDMAQVNKQT (132 aa)). ATP is bound by residues threonine 40, 66 to 72 (GDGTINE), and threonine 95. Mg(2+) is bound by residues leucine 215, aspartate 218, and leucine 220. The active-site Proton acceptor is the glutamate 271.

It belongs to the diacylglycerol/lipid kinase family. YegS lipid kinase subfamily. Requires Mg(2+) as cofactor. The cofactor is Ca(2+).

Its subcellular location is the cytoplasm. Probably phosphorylates lipids; the in vivo substrate is unknown. The sequence is that of Probable lipid kinase YegS from Escherichia coli O45:K1 (strain S88 / ExPEC).